Reading from the N-terminus, the 463-residue chain is Glutamate--tRNA ligase 1 (463 aa).

Positions 11-21 (PSPTGYLHIGG) match the 'HIGH' region motif. Residues 240–244 (KLSKR) carry the 'KMSKS' region motif. An ATP-binding site is contributed by Lys-243.

Belongs to the class-I aminoacyl-tRNA synthetase family. Glutamate--tRNA ligase type 1 subfamily. Monomer.

Its subcellular location is the cytoplasm. It catalyses the reaction tRNA(Glu) + L-glutamate + ATP = L-glutamyl-tRNA(Glu) + AMP + diphosphate. In terms of biological role, catalyzes the attachment of glutamate to tRNA(Glu) in a two-step reaction: glutamate is first activated by ATP to form Glu-AMP and then transferred to the acceptor end of tRNA(Glu). This is Glutamate--tRNA ligase 1 from Campylobacter jejuni subsp. doylei (strain ATCC BAA-1458 / RM4099 / 269.97).